Reading from the N-terminus, the 97-residue chain is uncharacterized protein (97 aa).

3 helical membrane-spanning segments follow: residues 5 to 25 (TLVAIVVFFGNGEPFHVSLSV), 27 to 47 (MVFVLLLSSTRIHEVVVLICY), and 77 to 97 (IISINDICIYGCIALTVVFIL).

The protein resides in the membrane. This is an uncharacterized protein from Saccharomyces cerevisiae (strain ATCC 204508 / S288c) (Baker's yeast).